Consider the following 917-residue polypeptide: Dolichyl-phosphooligosaccharide-protein glycotransferase (917 aa).

A compositionally biased stretch (basic and acidic residues) spans methionine 1–asparagine 10. Residues methionine 1–lysine 20 are disordered. At methionine 1–threonine 38 the chain is on the cytoplasmic side. Residues serine 11–lysine 20 show a composition bias toward low complexity. Residues isoleucine 39 to methionine 59 form a helical membrane-spanning segment. Residues glycine 60–asparagine 154 are Extracellular-facing. Positions alanine 82–aspartate 84 match the DXD motif 1 motif. Aspartate 84 serves as a coordination point for Mn(2+). Residues alanine 155–valine 175 traverse the membrane as a helical segment. The Cytoplasmic portion of the chain corresponds to arginine 176–aspartate 182. Residues isoleucine 183–valine 203 traverse the membrane as a helical segment. Over alanine 204–threonine 209 the chain is Extracellular. Aspartate 208 provides a ligand contact to Mn(2+). Positions aspartate 208–proline 210 match the DXD motif 2 motif. The chain crosses the membrane as a helical span at residues proline 210–tyrosine 230. At serine 231–lysine 237 the chain is on the cytoplasmic side. Residues serine 238 to tryptophan 260 traverse the membrane as a helical segment. The Extracellular segment spans residues tyrosine 261–tyrosine 263. Residues tyrosine 264–lysine 286 form a helical membrane-spanning segment. Over tyrosine 287 to asparagine 308 the chain is Cytoplasmic. Residues isoleucine 309–glycine 329 form a helical membrane-spanning segment. The Extracellular segment spans residues valine 330–glutamate 372. A TIXE motif motif is present at residues threonine 361–glutamate 364. Glutamate 364 is a binding site for Mn(2+). Residues isoleucine 373–leucine 393 traverse the membrane as a helical segment. The Cytoplasmic segment spans residues serine 394 to lysine 413. Residues leucine 414 to serine 434 form a helical membrane-spanning segment. Over lysine 435–arginine 438 the chain is Extracellular. Arginine 438 is a binding site for a glycophospholipid. Residues phenylalanine 439–glutamate 459 traverse the membrane as a helical segment. Residues glutamine 460–lysine 469 lie on the Cytoplasmic side of the membrane. A helical transmembrane segment spans residues tyrosine 470–tyrosine 490. The Extracellular portion of the chain corresponds to arginine 491–tyrosine 506. A helical transmembrane segment spans residues valine 507–alanine 527. Over glutamate 528–lysine 541 the chain is Cytoplasmic. Residues isoleucine 542–phenylalanine 562 form a helical membrane-spanning segment. At tyrosine 563–lysine 917 the chain is on the extracellular side. The interval tryptophan 592–aspartate 594 is interacts with target acceptor peptide in protein substrate. The WWDYG motif signature appears at tryptophan 592 to glycine 596. The MI motif motif lies at methionine 719 to tryptophan 726.

It belongs to the STT3 family. The cofactor is Mn(2+). It depends on Mg(2+) as a cofactor.

It is found in the cell membrane. It catalyses the reaction an archaeal dolichyl phosphooligosaccharide + [protein]-L-asparagine = an archaeal dolichyl phosphate + a glycoprotein with the oligosaccharide chain attached by N-beta-D-glycosyl linkage to a protein L-asparagine.. It functions in the pathway cell surface structure biogenesis; S-layer biogenesis. Its pathway is protein modification; protein glycosylation. Functionally, oligosaccharyl transferase (OST) that catalyzes the initial transfer of a defined glycan (ManNAcGlc-2,3-diNAcAGlcNAc in M.voltae) from the lipid carrier dolichol-monophosphate to an asparagine residue within an Asn-X-Ser/Thr consensus motif in nascent polypeptide chains, the first step in protein N-glycosylation. Involved in the assembly of an N-linked disaccharide that decorates the S-layer glycoprotein and flagellins. The polypeptide is Dolichyl-phosphooligosaccharide-protein glycotransferase (Methanococcus voltae).